Reading from the N-terminus, the 156-residue chain is Jun dimerization protein 2 (156 aa).

A disordered region spans residues 56-95; sequence KRPFDAIKSEDDDDDERKKRRREKNKVAAARCRNRKKERT. The bZIP domain occupies 70 to 133; that stretch reads DERKKRRREK…QQLIVMLNLH (64 aa). A basic motif region spans residues 72 to 94; that stretch reads RKKRRREKNKVAAARCRNRKKER. The tract at residues 98-126 is leucine-zipper; the sequence is LQKESERLEMLNSDLKSQIEELKSERQQL.

Belongs to the bZIP family. ATF subfamily.

It localises to the nucleus. In terms of biological role, component of the AP-1 transcription factor that represses transactivation mediated by the Jun family of proteins. This is Jun dimerization protein 2 (jdp2) from Danio rerio (Zebrafish).